Reading from the N-terminus, the 296-residue chain is Phosphoribosylaminoimidazole-succinocarboxamide synthase (296 aa).

The protein belongs to the SAICAR synthetase family.

The catalysed reaction is 5-amino-1-(5-phospho-D-ribosyl)imidazole-4-carboxylate + L-aspartate + ATP = (2S)-2-[5-amino-1-(5-phospho-beta-D-ribosyl)imidazole-4-carboxamido]succinate + ADP + phosphate + 2 H(+). It functions in the pathway purine metabolism; IMP biosynthesis via de novo pathway; 5-amino-1-(5-phospho-D-ribosyl)imidazole-4-carboxamide from 5-amino-1-(5-phospho-D-ribosyl)imidazole-4-carboxylate: step 1/2. The protein is Phosphoribosylaminoimidazole-succinocarboxamide synthase of Syntrophotalea carbinolica (strain DSM 2380 / NBRC 103641 / GraBd1) (Pelobacter carbinolicus).